The primary structure comprises 370 residues: Dual-specificity RNA methyltransferase RlmN (370 aa).

The active-site Proton acceptor is E93. In terms of domain architecture, Radical SAM core spans 99 to 337; the sequence is EEGRGTLCVS…VTTVRKTRGD (239 aa). Cysteines 106 and 343 form a disulfide. [4Fe-4S] cluster is bound by residues C113, C117, and C120. Residues 167–168, S199, 221–223, and N300 contribute to the S-adenosyl-L-methionine site; these read GE and SLH. C343 acts as the S-methylcysteine intermediate in catalysis.

The protein belongs to the radical SAM superfamily. RlmN family. It depends on [4Fe-4S] cluster as a cofactor.

It is found in the cytoplasm. The catalysed reaction is adenosine(2503) in 23S rRNA + 2 reduced [2Fe-2S]-[ferredoxin] + 2 S-adenosyl-L-methionine = 2-methyladenosine(2503) in 23S rRNA + 5'-deoxyadenosine + L-methionine + 2 oxidized [2Fe-2S]-[ferredoxin] + S-adenosyl-L-homocysteine. The enzyme catalyses adenosine(37) in tRNA + 2 reduced [2Fe-2S]-[ferredoxin] + 2 S-adenosyl-L-methionine = 2-methyladenosine(37) in tRNA + 5'-deoxyadenosine + L-methionine + 2 oxidized [2Fe-2S]-[ferredoxin] + S-adenosyl-L-homocysteine. Specifically methylates position 2 of adenine 2503 in 23S rRNA and position 2 of adenine 37 in tRNAs. m2A2503 modification seems to play a crucial role in the proofreading step occurring at the peptidyl transferase center and thus would serve to optimize ribosomal fidelity. This Francisella tularensis subsp. mediasiatica (strain FSC147) protein is Dual-specificity RNA methyltransferase RlmN.